The sequence spans 290 residues: Ig delta chain C region membrane-bound form (290 aa).

One can recognise an Ig-like 1 domain in the interval 5–105 (PDMFLLSECK…WDSQSSKRVT (101 aa)). An intrachain disulfide couples Cys-26 to Cys-78. Residues Asn-58 and Asn-75 are each glycosylated (N-linked (GlcNAc...) asparagine). The interval 89 to 111 (PFKFPESWDSQSSKRVTPTLQAK) is disordered. Positions 96–111 (WDSQSSKRVTPTLQAK) are enriched in polar residues. 3 N-linked (GlcNAc...) asparagine glycosylation sites follow: Asn-112, Asn-135, and Asn-227. The Ig-like 2 domain maps to 133–233 (PSNLTVNILT…TKLNASKSLA (101 aa)). Residues 262-279 (GLWPTMCTFVALFLLTLL) traverse the membrane as a helical segment. At 280-290 (YSGFVTFIKVK) the chain is on the cytoplasmic side.

In terms of tissue distribution, cell lines producing IgD contain several mRNA species for Ig delta chains. In plasmacytomas, the secreted form is the major component, and the membrane-bound form is a minor component. In spleen, however, the membrane-bound form is the major component. These two forms differ in their C-terminal segments.

The protein resides in the cell membrane. The sequence is that of Ig delta chain C region membrane-bound form from Mus musculus (Mouse).